A 723-amino-acid chain; its full sequence is E3 ubiquitin-protein ligase LRSAM1 (723 aa).

LRR repeat units follow at residues 30–51 (ADDILDISKCELSEIPFGAFAT), 56–77 (QKKVLIVHTNHLTSLLPKSCSL), 82–103 (TIKVLDLHDNQLTALPDDLGQL), 105–127 (ALQVLNVERNQLMQLPRSIGNLT), 128–149 (QLQTLNVKDNKLKELPDTVGEL), and 151–172 (SLRTLNISGNEIQRLPQMLAHV). Position 234 is a phosphoserine (Ser-234). Coiled coils occupy residues 254–380 (SDYE…TESL) and 510–562 (ALSS…KPLS). The disordered stretch occupies residues 282 to 314 (TQLLQQSSSQKDEILQTVKEEQSRLEQGLSEHQ). The segment covering 291 to 314 (QKDEILQTVKEEQSRLEQGLSEHQ) has biased composition (basic and acidic residues). Residues 569–632 (GMERQLVALL…LRRVQELLDA (64 aa)) form the SAM domain. Ser-604 carries the post-translational modification Phosphoserine. The disordered stretch occupies residues 642-665 (PMGEVVTPTAPQEPPESVRPSAPP). 2 consecutive short sequence motifs (PTAP motif) follow at residues 649–652 (PTAP) and 661–664 (PSAP). The RING-type zinc-finger motif lies at 675-710 (CVVCLEREAQMIFLNCGHVCCCQQCCQPLRTCPLCR).

In terms of assembly, interacts with TSG101. Interacts with PHF23. Interacts with FUS. Post-translationally, ubiquitination promoted by PHF23 leads to proteasomal degradation. As to expression, highly expressed in adult spinal cord motoneurons as well as in fetal spinal cord and muscle tissue.

The protein localises to the cytoplasm. The enzyme catalyses S-ubiquitinyl-[E2 ubiquitin-conjugating enzyme]-L-cysteine + [acceptor protein]-L-lysine = [E2 ubiquitin-conjugating enzyme]-L-cysteine + N(6)-ubiquitinyl-[acceptor protein]-L-lysine.. It participates in protein modification; protein ubiquitination. In terms of biological role, E3 ubiquitin-protein ligase that mediates monoubiquitination of TSG101 at multiple sites, leading to inactivate the ability of TSG101 to sort endocytic (EGF receptors) and exocytic (HIV-1 viral proteins) cargos. Bacterial recognition protein that defends the cytoplasm from invasive pathogens. Localizes to several intracellular bacterial pathogens and generates the bacteria-associated ubiquitin signal leading to autophagy-mediated intracellular bacteria degradation (xenophagy). This is E3 ubiquitin-protein ligase LRSAM1 from Homo sapiens (Human).